The sequence spans 125 residues: Period circadian protein (125 aa).

A disordered region spans residues 1–125; that stretch reads EGSGGSGSSG…VTLTESLLNK (125 aa). 3 repeat units span residues 30–31, 33–34, and 35–36. The segment covering 30-84 has biased composition (gly residues); it reads GTGGTGTNTGTNTGTGTGTGTGTGTGTGTGTGTGTGTGTGTGTGTGTGKGAGAGT. The 28 X 2 AA approximate tandem repeats of G-[TA] stretch occupies residues 30–86; it reads GTGGTGTNTGTNTGTGTGTGTGTGTGTGTGTGTGTGTGTGTGTGTGTGKGAGAGTGT. One copy of the 4; approximate repeat lies at 37-38; it reads NT. Residues 39–40 form repeat 5; that stretch reads GT. The stretch at 41 to 42 is one 6; approximate repeat; that stretch reads NT. 17 consecutive repeat copies span residues 43–44, 45–46, 47–48, 49–50, 51–52, 53–54, 55–56, 57–58, 59–60, 61–62, 63–64, 65–66, 67–68, 69–70, 71–72, 73–74, and 75–76. A 24; approximate repeat occupies 77–78; the sequence is GK. 4 consecutive repeat copies span residues 79–80, 81–82, 83–84, and 85–86. Residues 85–112 are compositionally biased toward low complexity; that stretch reads GTATNETAGPGTTTTTTTRSTTTAATAA. The segment covering 116–125 has biased composition (polar residues); that stretch reads VTLTESLLNK.

As to quaternary structure, forms a heterodimer with timeless (TIM); the complex then translocates into the nucleus. Post-translationally, phosphorylated with a circadian rhythmicity, probably by the double-time protein (dbt). Phosphorylation could be implicated in the stability of per monomer and in the formation of heterodimer per-tim.

The protein resides in the nucleus. Its subcellular location is the cytoplasm. It localises to the perinuclear region. Essential for biological clock functions. Determines the period length of circadian and ultradian rhythms; an increase in PER dosage leads to shortened circadian rhythms and a decrease leads to lengthened circadian rhythms. Essential for the circadian rhythmicity of locomotor activity, eclosion behavior, and for the rhythmic component of the male courtship song that originates in the thoracic nervous system. The biological cycle depends on the rhythmic formation and nuclear localization of the TIM-PER complex. Light induces the degradation of TIM, which promotes elimination of PER. Nuclear activity of the heterodimer coordinatively regulates PER and TIM transcription through a negative feedback loop. Behaves as a negative element in circadian transcriptional loop. Does not appear to bind DNA, suggesting indirect transcriptional inhibition. The sequence is that of Period circadian protein (per) from Drosophila ananassae (Fruit fly).